Here is a 163-residue protein sequence, read N- to C-terminus: Nucleotide-binding protein MUL_0671 (163 aa).

This sequence belongs to the YajQ family.

Nucleotide-binding protein. In Mycobacterium ulcerans (strain Agy99), this protein is Nucleotide-binding protein MUL_0671.